A 424-amino-acid chain; its full sequence is UPF0229 protein YPTS_2141 (424 aa).

A disordered region spans residues Thr84–Glu109. Gly residues predominate over residues Gln92–Gly105.

Belongs to the UPF0229 family.

The chain is UPF0229 protein YPTS_2141 from Yersinia pseudotuberculosis serotype IB (strain PB1/+).